Reading from the N-terminus, the 302-residue chain is Protoheme IX farnesyltransferase (302 aa).

9 helical membrane-spanning segments follow: residues 27 to 47, 48 to 68, 97 to 117, 119 to 139, 148 to 168, 176 to 196, 219 to 239, 240 to 260, and 280 to 300; these read VLTLVVFTGWCGLLAAPQSIH, PVLGFTAVLCIALGAGAAGAL, SALHFGVGLGIFSVLLMGLAL, VLAAAILAVSILFYVVVYTIW, IVIGGAAGAFPALIGWAAATG, LLFALVFLWTPPHFWALALFI, IQIMLYTVPMVIAAVAPWAMG, LTGAIYGIGASLLSALFLLLA, and LFGFSILYLFLIFGLVVADKV.

This sequence belongs to the UbiA prenyltransferase family. Protoheme IX farnesyltransferase subfamily.

It localises to the cell inner membrane. It catalyses the reaction heme b + (2E,6E)-farnesyl diphosphate + H2O = Fe(II)-heme o + diphosphate. It functions in the pathway porphyrin-containing compound metabolism; heme O biosynthesis; heme O from protoheme: step 1/1. Its function is as follows. Converts heme B (protoheme IX) to heme O by substitution of the vinyl group on carbon 2 of heme B porphyrin ring with a hydroxyethyl farnesyl side group. The chain is Protoheme IX farnesyltransferase from Rhizorhabdus wittichii (strain DSM 6014 / CCUG 31198 / JCM 15750 / NBRC 105917 / EY 4224 / RW1) (Sphingomonas wittichii).